Consider the following 67-residue polypeptide: UPF0434 protein Reut_A0592 (67 aa).

Belongs to the UPF0434 family.

The protein is UPF0434 protein Reut_A0592 of Cupriavidus pinatubonensis (strain JMP 134 / LMG 1197) (Cupriavidus necator (strain JMP 134)).